Here is a 281-residue protein sequence, read N- to C-terminus: 2-dehydro-3-deoxyphosphooctonate aldolase (281 aa).

Belongs to the KdsA family.

Its subcellular location is the cytoplasm. It catalyses the reaction D-arabinose 5-phosphate + phosphoenolpyruvate + H2O = 3-deoxy-alpha-D-manno-2-octulosonate-8-phosphate + phosphate. Its pathway is carbohydrate biosynthesis; 3-deoxy-D-manno-octulosonate biosynthesis; 3-deoxy-D-manno-octulosonate from D-ribulose 5-phosphate: step 2/3. It functions in the pathway bacterial outer membrane biogenesis; lipopolysaccharide biosynthesis. The chain is 2-dehydro-3-deoxyphosphooctonate aldolase from Azotobacter vinelandii (strain DJ / ATCC BAA-1303).